A 325-amino-acid chain; its full sequence is MESGSFPVINMELLQGSQRPAAMALLRDACENWGFFELLNHGISHELMNRVEAVNKEHYRRFREQRFKEFASKTLDSVENVDPDNLDWESTFFLRHLPTSNISQIPDLDDDCRATMKEFARELEKLAERLLDLLCEDLGLEKGYLKRVFCGGSDGLPTFGTKVSNYPPCPKPDLIKGLRAHTDAGGIILLFQDDKVSGLQLLKDREWIEVPPLRYSIVVNIGDQLEVITNGKYKSVLHRVVAQTDGNRMSIASFYNPGSDAVIFPAPALVEKEAEEEEKKEIYPKFVFQDYMNLYIRKKFEAKEPRFEAMKSMEIVMSSQPIPTA.

The Fe2OG dioxygenase domain maps to 157–257; sequence PTFGTKVSNY…RMSIASFYNP (101 aa). Fe cation is bound by residues histidine 181, aspartate 183, and histidine 238.

Belongs to the iron/ascorbate-dependent oxidoreductase family. It depends on Fe cation as a cofactor.

It catalyses the reaction 1-aminocyclopropane-1-carboxylate + L-ascorbate + O2 = ethene + L-dehydroascorbate + hydrogen cyanide + CO2 + 2 H2O. Its pathway is alkene biosynthesis; ethylene biosynthesis via S-adenosyl-L-methionine; ethylene from S-adenosyl-L-methionine: step 2/2. The sequence is that of 1-aminocyclopropane-1-carboxylate oxidase 2 (ACO2) from Doritaenopsis sp. (Moth orchid).